The chain runs to 118 residues: Small ribosomal subunit protein bTHXc (118 aa).

The transit peptide at 1–55 directs the protein to the chloroplast; the sequence is MASLILGAPPRVTVALPSSRLSSSHSETAGVSLSCFTHQFSLSTSSSSSIPLVYC. Positions 61-118 are disordered; the sequence is KTAKGKRFNHSFGNARPRNKSKGRGPERVPVPPAPPRKDKFENDEKIKIDIDESLFSN. Positions 96–111 are enriched in basic and acidic residues; sequence PRKDKFENDEKIKIDI. Ser117 carries the post-translational modification Phosphoserine.

It belongs to the bacterial ribosomal protein bTHX family. In terms of assembly, part of the 30S ribosomal subunit.

Its subcellular location is the plastid. It localises to the chloroplast. The sequence is that of Small ribosomal subunit protein bTHXc (RPS31) from Arabidopsis thaliana (Mouse-ear cress).